The sequence spans 345 residues: Diacylglycerol O-acyltransferase 1 (345 aa).

The Cytoplasmic segment spans residues 1 to 49; the sequence is MSEETSIPGIIASTPPISKDSRRNVSHWLQALAVFLHSVSLTLTASWYT. Residues 50–70 form a helical membrane-spanning segment; sequence VLWAFLPFWPFLIVYLIWLIY. Topologically, residues 71–113 are lumenal; that stretch reads DDGFVTGKDRQKRWLRNAPPYRWFCHYFPIRLHKTTELDSEKN. The chain crosses the membrane as a helical span at residues 114-134; it reads YIFGYHPHGIISLGAFGGFAS. Over 135–141 the chain is Cytoplasmic; that stretch reads EGADFSK. Residues 142–162 traverse the membrane as a helical segment; the sequence is LFPGINVSVLTLNSNFYVPVY. At 163–216 the chain is on the lumenal side; the sequence is RDYLMALNINSVSKKSCVSILSRKPGDSVLIVIGGAQESLLSRPGQNNLVLKKR. The helical transmembrane segment at 217–237 threads the bilayer; sequence FGFVKLAFLTGSSLVPCFAFG. Residues 238–345 are Cytoplasmic-facing; the sequence is ESDIFEQVDN…NRISELKLSA (108 aa).

This sequence belongs to the diacylglycerol acyltransferase family.

It localises to the lipid droplet. The protein resides in the endoplasmic reticulum membrane. It carries out the reaction an acyl-CoA + a 1,2-diacyl-sn-glycerol = a triacyl-sn-glycerol + CoA. The enzyme catalyses a 2-acylglycerol + an acyl-CoA = a 1,2-diacyl-sn-glycerol + CoA. It participates in glycerolipid metabolism; triacylglycerol biosynthesis. In terms of biological role, catalyzes the terminal and only committed step in triacylglycerol (TAG) synthesis by using diacylglycerol (DAG) and fatty acyl-CoA as substrates. Required for storage lipid synthesis. Major DAG esterifying enzyme in stationary phase when TAG production is particularly active. Involved in lipid particle synthesis from the endoplasmic reticulum, promoting localized TAG production at discrete ER subdomains. This is Diacylglycerol O-acyltransferase 1 (dga1) from Schizosaccharomyces pombe (strain 972 / ATCC 24843) (Fission yeast).